Reading from the N-terminus, the 890-residue chain is Phosphatidate phosphatase LPIN1 (890 aa).

The N-LIP stretch occupies residues 1 to 108 (MNYVGQLAGQ…IPMHLATSPI (108 aa)). Serine 106 and serine 150 each carry phosphoserine. Disordered stretches follow at residues 125–183 (VDRM…DMFP), 228–300 (SYPN…SSRK), 365–392 (KPPS…SRHL), and 421–456 (SGLA…STSD). Residues 152-161 (VKKRRKRRRK) are compositionally biased toward basic residues. Residues 153 to 158 (KKRRKR) carry the Nuclear localization signal motif. Composition is skewed to basic and acidic residues over residues 162–172 (SQLDSLKRDDN) and 252–265 (SDSE…ERTG). 3 positions are modified to phosphoserine: serine 252, serine 254, and serine 260. Threonine 264 is modified (phosphothreonine). At serine 294 the chain carries Phosphoserine. Lysine 425 is subject to N6-acetyllysine. Polar residues predominate over residues 431–440 (GARSANQSPQ). Serine 434, serine 438, and serine 449 each carry phosphoserine. Low complexity predominate over residues 441–456 (SVGSSGVDSGVESTSD). Residue lysine 565 forms a Glycyl lysine isopeptide (Lys-Gly) (interchain with G-Cter in SUMO) linkage. The tract at residues 566-616 (EESKPEQCLAGKAHSTGEQPPQLSLATRVKHESSSSDEERAAAKPSNAGHL) is disordered. Residues 581–590 (TGEQPPQLSL) show a composition bias toward polar residues. The span at 594–607 (VKHESSSSDEERAA) shows a compositional bias: basic and acidic residues. N6-acetyllysine is present on lysine 595. Lysine 595 participates in a covalent cross-link: Glycyl lysine isopeptide (Lys-Gly) (interchain with G-Cter in SUMO). A phosphoserine mark is found at serine 600 and serine 601. A C-LIP region spans residues 624 to 830 (YKKTLRLTSE…VNPKGELVQE (207 aa)). Residues 678 to 682 (DIDGT) carry the DXDXT motif motif. Positions 689-693 (LGHIL) match the LXXIL motif motif. Residues serine 887 and serine 889 each carry the phosphoserine modification.

Belongs to the lipin family. As to quaternary structure, interacts (via LXXIL motif) with PPARA. Interacts with PPARGC1A. Interaction with PPARA and PPARGC1A leads to the formation of a complex that modulates gene transcription. Interacts with MEF2C. It depends on Mg(2+) as a cofactor. Requires Mn(2+) as cofactor. Phosphorylated at multiple sites by mTOR in response to insulin, leading to its inactivation. Phosphorylation does not affect the catalytic activity but regulates the localization. Phosphorylation is decreased by epinephrine. Dephosphorylated by the CTDNEP1-CNEP1R1 complex. Dephosphorylation following mTOR inhibition promotes its activity. In terms of processing, acetylation at Lys-425 and Lys-595 by KAT5 in response to fatty acids promotes translocation to the endoplasmic reticulum and synthesis of diacylglycerol. Post-translationally, sumoylated. As to expression, specifically expressed in skeletal muscle. Also abundant in adipose tissue. Lower levels in some portions of the digestive tract.

It is found in the cytoplasm. The protein localises to the cytosol. The protein resides in the endoplasmic reticulum membrane. Its subcellular location is the nucleus membrane. It catalyses the reaction a 1,2-diacyl-sn-glycero-3-phosphate + H2O = a 1,2-diacyl-sn-glycerol + phosphate. The enzyme catalyses 1-octadecanoyl-2-(4Z,7Z,10Z,13Z,16Z,19Z-docosahexaenoyl)-sn-glycero-3-phosphate + H2O = 1-octadecanoyl-2-(4Z,7Z,10Z,13Z,16Z,19Z-docosahexaenoyl)-sn-glycerol + phosphate. The catalysed reaction is 1-octadecanoyl-2-(5Z,8Z,11Z,14Z-eicosatetraenoyl)-sn-glycero-3-phosphate + H2O = 1-octadecanoyl-2-(5Z,8Z,11Z,14Z-eicosatetraenoyl)-sn-glycerol + phosphate. It carries out the reaction 1-octadecanoyl-2-(9Z,12Z-octadecadienoyl)-sn-glycero-3-phosphate + H2O = 1-octadecanoyl-2-(9Z,12Z)-octadecadienoyl-sn-glycerol + phosphate. It catalyses the reaction 1-octadecanoyl-2-(9Z-octadecenoyl)-sn-glycero-3-phosphate + H2O = 1-octadecanoyl-2-(9Z-octadecenoyl)-sn-glycerol + phosphate. The enzyme catalyses 1-hexadecanoyl-2-(4Z,7Z,10Z,13Z,16Z,19Z-docosahexaenoyl)-sn-glycero-3-phosphate + H2O = 1-hexadecanoyl-2-(4Z,7Z,10Z,13Z,16Z,19Z-docosahexaenoyl)-sn-glycerol + phosphate. The catalysed reaction is 1,2-dioctadecanoyl-sn-glycero-3-phosphate + H2O = 1,2-dioctadecanoyl-sn-glycerol + phosphate. It carries out the reaction 1-hexadecanoyl-2-(5Z,8Z,11Z,14Z-eicosatetraenoyl)-sn-glycero-3-phosphate + H2O = 1-hexadecanoyl-2-(5Z,8Z,11Z,14Z-eicosatetraenoyl)-sn-glycerol + phosphate. It catalyses the reaction 1-hexadecanoyl-2-(9Z,12Z-octadecadienoyl)-sn-glycero-3-phosphate + H2O = 1-hexadecanoyl-2-(9Z,12Z-octadecadienoyl)-sn-glycerol + phosphate. The enzyme catalyses 1-hexadecanoyl-2-(9Z-octadecenoyl)-sn-glycero-3-phosphate + H2O = 1-hexadecanoyl-2-(9Z-octadecenoyl)-sn-glycerol + phosphate. The catalysed reaction is 1,2-di-(4Z,7Z,10Z,13Z,16Z,19Z-docosahexaenoyl)-sn-glycero-3-phosphate + H2O = 1,2-di-(4Z,7Z,10Z,13Z,16Z,19Z-docosahexaenoyl)-sn-glycerol + phosphate. It carries out the reaction 1,2-di-(5Z,8Z,11Z,14Z)-eicosatetraenoyl-sn-glycero-3-phosphate + H2O = 1,2-di-(5Z,8Z,11Z,14Z)-eicosatetraenoyl-sn-glycerol + phosphate. It catalyses the reaction 1,2-di-(9Z,12Z-octadecadienoyl)-sn-glycero-3-phosphate + H2O = 1,2-di-(9Z,12Z-octadecadienoyl)-sn-glycerol + phosphate. The enzyme catalyses 1,2-di-(9Z-octadecenoyl)-sn-glycero-3-phosphate + H2O = 1,2-di-(9Z-octadecenoyl)-sn-glycerol + phosphate. The catalysed reaction is 1,2-dihexadecanoyl-sn-glycero-3-phosphate + H2O = 1,2-dihexadecanoyl-sn-glycerol + phosphate. Potently inhibited by sphingolipids, in particular, the sphingoid bases sphinganine and sphingosine and ceramide-1-phosphate. Inhibited by concentrations of Mg(2+) and Mn(2+) above their optimums and by Ca(2+), Zn(2+), N-ethylmaleimide and propranolol. With respect to regulation, sertraline and propanolol inhibit activity in dose-dependent manners with IC(50) values of 103 uM and 226 uM, respectively. Its activity is regulated as follows. Sertraline and propanolol inhibit activity in dose-dependent manners with IC(50) values of 108 uM and 271 uM, respectively. Sertraline and propanolol inhibit activity in dose-dependent manners with IC(50) values of 143 uM and 227 uM, respectively. In terms of biological role, acts as a magnesium-dependent phosphatidate phosphatase enzyme which catalyzes the conversion of phosphatidic acid to diacylglycerol during triglyceride, phosphatidylcholine and phosphatidylethanolamine biosynthesis and therefore controls the metabolism of fatty acids at different levels. Is involved in adipocyte differentiation. Recruited at the mitochondrion outer membrane and is involved in mitochondrial fission by converting phosphatidic acid to diacylglycerol. Acts also as nuclear transcriptional coactivator for PPARGC1A/PPARA regulatory pathway to modulate lipid metabolism gene expression. In Homo sapiens (Human), this protein is Phosphatidate phosphatase LPIN1.